The sequence spans 70 residues: MAILRADELRGMSMEELKEKLVELKRELLKERASKAVAGAPSNPGRMREIRRTIARILTIMNEKKRMTSQ.

This sequence belongs to the universal ribosomal protein uL29 family.

The chain is Large ribosomal subunit protein uL29 (rpl29) from Methanocaldococcus jannaschii (strain ATCC 43067 / DSM 2661 / JAL-1 / JCM 10045 / NBRC 100440) (Methanococcus jannaschii).